A 479-amino-acid chain; its full sequence is Ribulose bisphosphate carboxylase large chain (479 aa).

The propeptide occupies Met-1–Ser-2. Substrate-binding residues include Asn-123 and Thr-173. The Proton acceptor role is filled by Lys-175. Lys-177 contacts substrate. Positions 201, 203, and 204 each coordinate Mg(2+). Lys-201 bears the N6-carboxylysine mark. Phosphoserine is present on Ser-208. Residue His-294 is the Proton acceptor of the active site. Residues Arg-295 and His-327 each contribute to the substrate site. Thr-330 carries the phosphothreonine modification. Ser-379 contributes to the substrate binding site.

This sequence belongs to the RuBisCO large chain family. Type I subfamily. Heterohexadecamer of 8 large chains and 8 small chains; disulfide-linked. The disulfide link is formed within the large subunit homodimers. The cofactor is Mg(2+). In terms of processing, the disulfide bond which can form in the large chain dimeric partners within the hexadecamer appears to be associated with oxidative stress and protein turnover.

It localises to the plastid. Its subcellular location is the chloroplast. It catalyses the reaction 2 (2R)-3-phosphoglycerate + 2 H(+) = D-ribulose 1,5-bisphosphate + CO2 + H2O. The enzyme catalyses D-ribulose 1,5-bisphosphate + O2 = 2-phosphoglycolate + (2R)-3-phosphoglycerate + 2 H(+). Functionally, ruBisCO catalyzes two reactions: the carboxylation of D-ribulose 1,5-bisphosphate, the primary event in carbon dioxide fixation, as well as the oxidative fragmentation of the pentose substrate in the photorespiration process. Both reactions occur simultaneously and in competition at the same active site. This is Ribulose bisphosphate carboxylase large chain from Capsella bursa-pastoris (Shepherd's purse).